A 307-amino-acid chain; its full sequence is Nucleotide-binding protein ACP_0619 (307 aa).

Residues 1 to 14 (MPAPEPTRRAKKDA) show a composition bias toward basic and acidic residues. Positions 1-23 (MPAPEPTRRAKKDASASPSPAHP) are disordered. 33-40 (GLSGAGKG) lines the ATP pocket. 83–86 (DVRE) contacts GTP.

This sequence belongs to the RapZ-like family.

In terms of biological role, displays ATPase and GTPase activities. In Acidobacterium capsulatum (strain ATCC 51196 / DSM 11244 / BCRC 80197 / JCM 7670 / NBRC 15755 / NCIMB 13165 / 161), this protein is Nucleotide-binding protein ACP_0619.